Consider the following 209-residue polypeptide: Ribosomal RNA large subunit methyltransferase E (209 aa).

Residues Gly-63, Trp-65, Asp-83, Asp-99, and Asp-124 each coordinate S-adenosyl-L-methionine. The active-site Proton acceptor is the Lys-164.

Belongs to the class I-like SAM-binding methyltransferase superfamily. RNA methyltransferase RlmE family.

Its subcellular location is the cytoplasm. The enzyme catalyses uridine(2552) in 23S rRNA + S-adenosyl-L-methionine = 2'-O-methyluridine(2552) in 23S rRNA + S-adenosyl-L-homocysteine + H(+). Specifically methylates the uridine in position 2552 of 23S rRNA at the 2'-O position of the ribose in the fully assembled 50S ribosomal subunit. The sequence is that of Ribosomal RNA large subunit methyltransferase E from Vibrio campbellii (strain ATCC BAA-1116).